We begin with the raw amino-acid sequence, 128 residues long: MAFTGKYETESEKNYDEFMKRLGLSSDRIEKGRNFKVISEIQQDGQNFTWSQHYPGGHSISNNFTIGKETEMETVGNKKFKVTVKMEGGKVVVDSANYHHTVEIVDGKLVEVSTFGGVIYERVSKKVA.

A2 carries the post-translational modification N-acetylalanine.

Belongs to the calycin superfamily. Fatty-acid binding protein (FABP) family.

It localises to the cytoplasm. The protein resides in the membrane. Functionally, binds to bile acids and is involved in enterohepatic bile acid metabolism. Required for efficient apical to basolateral transport of conjugated bile acids in ileal enterocytes. Stimulates gastric acid and pepsinogen secretion. The chain is Gastrotropin (FABP6) from Bos taurus (Bovine).